Here is a 228-residue protein sequence, read N- to C-terminus: Lipoprotein-releasing system ATP-binding protein LolD 2 (228 aa).

One can recognise an ABC transporter domain in the interval 9-228; sequence RGLERVYKTE…KDGHLELQRV (220 aa). 42 to 49 is a binding site for ATP; the sequence is GPSGSGKS.

Belongs to the ABC transporter superfamily. Lipoprotein translocase (TC 3.A.1.125) family. The complex is composed of two ATP-binding proteins (LolD) and two transmembrane proteins (LolC and LolE).

It is found in the cell inner membrane. Part of the ABC transporter complex LolCDE involved in the translocation of mature outer membrane-directed lipoproteins, from the inner membrane to the periplasmic chaperone, LolA. Responsible for the formation of the LolA-lipoprotein complex in an ATP-dependent manner. The sequence is that of Lipoprotein-releasing system ATP-binding protein LolD 2 from Caulobacter vibrioides (strain ATCC 19089 / CIP 103742 / CB 15) (Caulobacter crescentus).